A 194-amino-acid chain; its full sequence is Thymidylate kinase (194 aa).

7–14 (GIDTAGKS) contacts ATP.

Belongs to the thymidylate kinase family.

It carries out the reaction dTMP + ATP = dTDP + ADP. Phosphorylation of dTMP to form dTDP in both de novo and salvage pathways of dTTP synthesis. This chain is Thymidylate kinase, found in Nautilia profundicola (strain ATCC BAA-1463 / DSM 18972 / AmH).